A 338-amino-acid polypeptide reads, in one-letter code: Ketol-acid reductoisomerase (NADP(+)) (338 aa).

In terms of domain architecture, KARI N-terminal Rossmann spans 1-181 (MKVFYDKDAD…GGGRAGIIET (181 aa)). Residues 24–27 (YGSQ), arginine 47, and serine 52 each bind NADP(+). Histidine 107 is a catalytic residue. Residue glycine 133 participates in NADP(+) binding. One can recognise a KARI C-terminal knotted domain in the interval 182–327 (NFREETETDL…AKLRAMMPWI (146 aa)). Mg(2+) is bound by residues aspartate 190, glutamate 194, glutamate 226, and glutamate 230. Serine 251 serves as a coordination point for substrate.

The protein belongs to the ketol-acid reductoisomerase family. Requires Mg(2+) as cofactor.

It catalyses the reaction (2R)-2,3-dihydroxy-3-methylbutanoate + NADP(+) = (2S)-2-acetolactate + NADPH + H(+). It carries out the reaction (2R,3R)-2,3-dihydroxy-3-methylpentanoate + NADP(+) = (S)-2-ethyl-2-hydroxy-3-oxobutanoate + NADPH + H(+). Its pathway is amino-acid biosynthesis; L-isoleucine biosynthesis; L-isoleucine from 2-oxobutanoate: step 2/4. It functions in the pathway amino-acid biosynthesis; L-valine biosynthesis; L-valine from pyruvate: step 2/4. Its function is as follows. Involved in the biosynthesis of branched-chain amino acids (BCAA). Catalyzes an alkyl-migration followed by a ketol-acid reduction of (S)-2-acetolactate (S2AL) to yield (R)-2,3-dihydroxy-isovalerate. In the isomerase reaction, S2AL is rearranged via a Mg-dependent methyl migration to produce 3-hydroxy-3-methyl-2-ketobutyrate (HMKB). In the reductase reaction, this 2-ketoacid undergoes a metal-dependent reduction by NADPH to yield (R)-2,3-dihydroxy-isovalerate. The sequence is that of Ketol-acid reductoisomerase (NADP(+)) from Polynucleobacter necessarius subsp. necessarius (strain STIR1).